We begin with the raw amino-acid sequence, 29 residues long: Trypsin inhibitor 1 (29 aa).

Disulfide bonds link Cys-3-Cys-20, Cys-10-Cys-22, and Cys-16-Cys-28.

Belongs to the protease inhibitor I7 (squash-type serine protease inhibitor) family.

It localises to the secreted. Inhibits trypsin. The polypeptide is Trypsin inhibitor 1 (Luffa aegyptiaca (Sponge gourd)).